We begin with the raw amino-acid sequence, 431 residues long: Glutamate-1-semialdehyde 2,1-aminomutase (431 aa).

Lys265 bears the N6-(pyridoxal phosphate)lysine mark.

It belongs to the class-III pyridoxal-phosphate-dependent aminotransferase family. HemL subfamily. Homodimer. Pyridoxal 5'-phosphate is required as a cofactor.

Its subcellular location is the cytoplasm. The enzyme catalyses (S)-4-amino-5-oxopentanoate = 5-aminolevulinate. It participates in porphyrin-containing compound metabolism; protoporphyrin-IX biosynthesis; 5-aminolevulinate from L-glutamyl-tRNA(Glu): step 2/2. In Pseudoalteromonas atlantica (strain T6c / ATCC BAA-1087), this protein is Glutamate-1-semialdehyde 2,1-aminomutase.